The sequence spans 420 residues: Pre-mRNA-splicing factor RBM22 (420 aa).

An N-acetylalanine modification is found at A2. S4 and S102 each carry phosphoserine. Glycyl lysine isopeptide (Lys-Gly) (interchain with G-Cter in SUMO2) cross-links involve residues K139 and K149. A C3H1-type zinc finger spans residues 159–186 (RNRPHICSFWVKGECKRGEECPYRHEKP). K212 carries the post-translational modification N6-acetyllysine. Residues 232–305 (TTLYVGGLGD…RRLNVKWGRS (74 aa)) enclose the RRM domain. Residue K290 forms a Glycyl lysine isopeptide (Lys-Gly) (interchain with G-Cter in SUMO2) linkage. 2 disordered regions span residues 303–343 (GRSQ…AAEE) and 372–420 (APPP…HSSP). The segment covering 309–318 (RGKEKEKDGT) has biased composition (basic and acidic residues).

Belongs to the SLT11 family. Component of the pre-catalytic and catalytic spliceosome complexes. Component of the postcatalytic spliceosome P complex. Interacts with PDCD6; the interaction induces translocation of PDCD6 in the cytoplasm. Interacts with PPIL1.

The protein resides in the nucleus. Its subcellular location is the cytoplasm. Required for pre-mRNA splicing as component of the activated spliceosome. Involved in the first step of pre-mRNA splicing. Binds directly to the internal stem-loop (ISL) domain of the U6 snRNA and to the pre-mRNA intron near the 5' splice site during the activation and catalytic phases of the spliceosome cycle. Involved in both translocations of the nuclear SLU7 to the cytoplasm and the cytosolic calcium-binding protein PDCD6 to the nucleus upon cellular stress responses. The protein is Pre-mRNA-splicing factor RBM22 (RBM22) of Bos taurus (Bovine).